Here is a 398-residue protein sequence, read N- to C-terminus: S-adenosylmethionine synthase (398 aa).

His16 contributes to the ATP binding site. Asp18 serves as a coordination point for Mg(2+). A K(+)-binding site is contributed by Glu51. Positions 64 and 108 each coordinate L-methionine. The tract at residues Gln108–Ala118 is flexible loop. Residues Asp176–Lys178, Lys242–Phe243, Asp251, Arg257–Lys258, Ala274, and Lys278 contribute to the ATP site. An L-methionine-binding site is contributed by Asp251. L-methionine is bound at residue Lys282.

This sequence belongs to the AdoMet synthase family. As to quaternary structure, homotetramer; dimer of dimers. Mg(2+) is required as a cofactor. The cofactor is K(+).

It is found in the cytoplasm. The catalysed reaction is L-methionine + ATP + H2O = S-adenosyl-L-methionine + phosphate + diphosphate. Its pathway is amino-acid biosynthesis; S-adenosyl-L-methionine biosynthesis; S-adenosyl-L-methionine from L-methionine: step 1/1. Functionally, catalyzes the formation of S-adenosylmethionine (AdoMet) from methionine and ATP. The overall synthetic reaction is composed of two sequential steps, AdoMet formation and the subsequent tripolyphosphate hydrolysis which occurs prior to release of AdoMet from the enzyme. This Rhodopseudomonas palustris (strain HaA2) protein is S-adenosylmethionine synthase.